Consider the following 53-residue polypeptide: UPF0391 membrane protein Acid_3618 (53 aa).

A run of 2 helical transmembrane segments spans residues 6-26 (LVFLVFALIAAVLGFGGLAGA) and 28-48 (VGIAKILFFVFLVIWLVAFLM).

It belongs to the UPF0391 family.

The protein resides in the cell membrane. The chain is UPF0391 membrane protein Acid_3618 from Solibacter usitatus (strain Ellin6076).